A 272-amino-acid chain; its full sequence is 2-amino-3,7-dideoxy-D-threo-hept-6-ulosonate synthase (272 aa).

Residue Asp-33 is the Proton acceptor of the active site. Residues 33–37 (DHGVS) and 153–155 (YPR) contribute to the 1-deoxy-D-threo-hexo-2,5-diulose 6-phosphate site. Tyr-153 (proton donor) is an active-site residue. Lys-184 serves as the catalytic Schiff-base intermediate with substrate. Residues 209–210 (GG) and 237–238 (GR) each bind 1-deoxy-D-threo-hexo-2,5-diulose 6-phosphate.

It belongs to the DeoC/FbaB aldolase family. ADHS subfamily. In terms of assembly, homodecamer.

It catalyses the reaction 1-deoxy-D-threo-hexo-2,5-diulose 6-phosphate + L-aspartate 4-semialdehyde = 2,3-dioxopropyl phosphate + 2-amino-2,3,7-trideoxy-D-lyxo-hept-6-ulosonate. Functionally, catalyzes a transaldol reaction between 6-deoxy-5-ketofructose 1-phosphate (DKFP) and L-aspartate semialdehyde (ASA) with an elimination of hydroxypyruvaldehyde phosphate to yield 2-amino-3,7-dideoxy-D-threo-hept-6-ulosonate (ADH). Plays a key role in an alternative pathway of the biosynthesis of 3-dehydroquinate (DHQ), which is involved in the canonical pathway for the biosynthesis of aromatic amino acids and which is also a precursor for the biosynthesis of p-aminobenzoic acid (PABA) in M.maripaludis. Does not possess fructose-bisphosphate (FBP) aldolase activity. This is 2-amino-3,7-dideoxy-D-threo-hept-6-ulosonate synthase from Methanococcus maripaludis (strain DSM 14266 / JCM 13030 / NBRC 101832 / S2 / LL).